A 95-amino-acid polypeptide reads, in one-letter code: Putative per-hexamer repeat protein 4 (95 aa).

This is Putative per-hexamer repeat protein 4 (Phxr4) from Mus musculus (Mouse).